Consider the following 383-residue polypeptide: Seipin (383 aa).

Residues 1 to 27 (MVNDPPVPALLWAQEVGHVLAGRARRL) are Cytoplasmic-facing. A helical transmembrane segment spans residues 28-48 (MLQFGVLFCTILLLLWVSVFL). The Lumenal portion of the chain corresponds to 49–242 (YGSFYYSYMP…TCAFVGVASN (194 aa)). N-linked (GlcNAc...) asparagine glycosylation is found at N88 and N242. The helical transmembrane segment at 243–263 (FTFLSVIVLFSYMQWVWGAVW) threads the bilayer. The Cytoplasmic segment spans residues 264–383 (PRHRFSLQVN…LRQRPTCSSS (120 aa)). A disordered region spans residues 279 to 383 (NSHHGAPRRI…LRQRPTCSSS (105 aa)). At S289 the chain carries Phosphoserine. A compositionally biased stretch (polar residues) spans 292-302 (QPGQESTQQSD). A compositionally biased stretch (basic and acidic residues) spans 322 to 332 (EEEKPEKRPLN). 2 positions are modified to phosphoserine: S342 and S345. The span at 353–371 (TEANPPTSASASALAPETL) shows a compositional bias: low complexity.

This sequence belongs to the seipin family. As to quaternary structure, undecamer (an oligomer having eleven subunits). Oligomerization is important for its function in lipid droplet formation. Interacts with LDAF1 to form an oligomeric complex. Interacts with RAB18. Interacts with ZFYVE1 in a RAB18-dependent manner. As to expression, expressed in the paraventricular nucleus of the hypothalamus (PVN) and brainstem dorsal vagal complex (DVC) in oxytocin and catecholaminergic neurons (at protein level). Highest expression detected in subcutaneous and epididymal white adipose tissue, brown adipose tissue and testis. Also expressed in brain, skeletal muscle and adrenal gland, with lower levels detected in liver, heart, kidney, spleen, lung and small intestine. In brain, detected in piriform cortex, olfactory tubercle, islands of Calleja, lateral septal nucleus, medial septal nucleus, nucleus of the vertical limb of the diagonal band, nucleus of the horizontal limb of the diagonal band, preoptic area, paraventricular thalamic nucleus, lateral globus pallidus, supraoptic nucleus, suprachiasmatic nucleus, subfornical organ, paraventricular nucleus of the hypothalamus, zona incerta, dorsomedial nucleus of the hypothalamus, ventromedial nucleus of the hypothalamus, arcuate nucleus of the hypothalamus, basomedial amygdaloid nucleus, medial amygdaloid nucleus, medial habenular, pyramidal cell layer of the hippocampus, granular layer of the dentate gyrus, posterior hypothalamus, supramammilliary nucleus, premammillary nucleus, nucleus of Darkschewitsch, Edinger-Westphal nucleus, ventral tegmental area, dorsal raphe nucleus, periaqueductal gray, median raphe nucleus, lateral parabrachial nucleus, dorsal tegmental nucleus, laterodorsal tegmental nucleus, locus coeruleus, Barrington's nucleus, medial vestibular nucleus, ambiguous nucleus, dorsal vagal complex and hypoglossal nucleus.

Its subcellular location is the endoplasmic reticulum membrane. The protein localises to the lipid droplet. Its function is as follows. Plays a crucial role in the formation of lipid droplets (LDs) which are storage organelles at the center of lipid and energy homeostasis. In association with LDAF1, defines the sites of LD formation in the ER. Also required for growth and maturation of small nascent LDs into larger mature LDs. Mediates the formation and/or stabilization of endoplasmic reticulum-lipid droplets (ER-LD) contacts, facilitating protein and lipid delivery from the ER into growing LDs. Regulates the maturation of ZFYVE1-positive nascent LDs and the function of the RAB18-ZFYVE1 complex in mediating the formation of ER-LD contacts. Binds anionic phospholipids including phosphatidic acid. Plays an important role in the differentiation and development of adipocytes. This chain is Seipin, found in Mus musculus (Mouse).